The sequence spans 471 residues: MGSKVAGKKKTQNDNKLDNENGSQQRENINTKTLLKGNLKISNYKYLEVIQLEHAVTKLVESYNKIIELSPNLVAYNEAVNNQDRVPVQILPSLSRYQLKLAAELKTLHDLKKDAILTEITDYENEFDTEQKQPILQEISKADMEKLEKLEQVKREKREKIDVNVYENLNEKEDEEEDEGEDSYDPTKAGDIVKATKWPPKLPEIQDLAIRARVFIHKSTIKDKVYLSGSEMINAHNERLEFLGDSILNSVMTLIIYNKFPDYSEGQLSTLRMNLVSNEQIKQWSIMYNFHEKLKTNFDLKDENSNFQNGKLKLYADVFEAYIGGLMEDDPRNNLPKIRKWLRKLAKPVIEEATRNQVALEKTDKLDMNAKRQLYSLIGYASLRLHYVTVKKPTAVDPNSIVECRVGDGTVLGTGVGRNIKIAGIRAAENALRDKKMLDFYAKQRAAIPRSESVLKDPSQKNKKRKFSDTS.

Residues 1-10 (MGSKVAGKKK) are compositionally biased toward basic residues. 2 disordered regions span residues 1-29 (MGSK…RENI) and 168-189 (NLNE…PTKA). The segment covering 20–29 (ENGSQQRENI) has biased composition (polar residues). Acidic residues predominate over residues 172-184 (KEDEEEDEGEDSY). The region spanning 227 to 331 (LSGSEMINAH…YIGGLMEDDP (105 aa)) is the RNase III domain. The DRBM domain maps to 369–437 (NAKRQLYSLI…AENALRDKKM (69 aa)). The disordered stretch occupies residues 451-471 (SESVLKDPSQKNKKRKFSDTS). A compositionally biased stretch (basic residues) spans 461-471 (KNKKRKFSDTS).

It carries out the reaction Endonucleolytic cleavage to 5'-phosphomonoester.. Functionally, dsRNA-specific nuclease that cleaves eukaryotic pre-ribosomal RNA at the U3 snoRNP-dependent A0 site in the 5'-external transcribed spacer (ETS) and in the 3'-ETS. In vitro, cleaves synthetic 5'-ETS RNA A0 site in the absence of snoRNA or other factors. Has an essential growth function in addition to pre-rRNA processing. In Saccharomyces cerevisiae (strain ATCC 204508 / S288c) (Baker's yeast), this protein is Ribonuclease 3 (RNT1).